The following is an 88-amino-acid chain: Gene 30 protein (88 aa).

The polypeptide is Gene 30 protein (30) (Mycobacterium (Mycobacteriophage D29)).